A 639-amino-acid polypeptide reads, in one-letter code: Bone morphogenetic protein 1 homolog (639 aa).

The first 23 residues, 1–23, serve as a signal peptide directing secretion; that stretch reads MDLLYYMTVSLLGFILSLTTFIG. The propeptide occupies 24–109; that stretch reads ETTRALSDDV…RAVTARPERR (86 aa). Residues 100 to 305 form the Peptidase M12A domain; the sequence is RAVTARPERR…IQANLLYKCP (206 aa). N-linked (GlcNAc...) asparagine glycans are attached at residues N122 and N140. Cystine bridges form between C143-C304, C167-C189, C169-C170, C307-C333, C360-C382, and C420-C446. H197 serves as a coordination point for Zn(2+). E198 is a catalytic residue. Zn(2+) is bound by residues H201 and H207. 2 CUB domains span residues 307-419 and 420-531; these read CGRT…YEAI and CGGH…DFFK. The N-linked (GlcNAc...) asparagine glycan is linked to N317. N455 is a glycosylation site (N-linked (GlcNAc...) asparagine). 4 disulfides stabilise this stretch: C473–C495, C536–C548, C544–C557, and C559–C572. The EGF-like; calcium-binding domain occupies 532 to 573; that stretch reads EKDECAQPDQGGCMDVCVNTIGSYRCDCRPGYELSSDGRRCE.

It depends on Zn(2+) as a cofactor. Ectodermal and primary mesenchyme cells in hatched blastula.

This Strongylocentrotus purpuratus (Purple sea urchin) protein is Bone morphogenetic protein 1 homolog.